Consider the following 473-residue polypeptide: Rifampicin monooxygenase (473 aa).

FAD is bound by residues Thr12, Glu31, Lys32, and Arg41. A rifampicin-binding site is contributed by Arg43. The FAD site is built by Gln98, Val122, and Thr156. Residue Arg196 participates in rifampicin binding. Residue Asp276 participates in FAD binding. A rifampicin-binding site is contributed by Gly285. The FAD site is built by Leu289 and Asn290.

This sequence belongs to the rifampicin monooxygenase family. In terms of assembly, homodimer. FAD is required as a cofactor.

It catalyses the reaction rifampicin + NADPH + O2 = rifampicin para-naphthoquinone carboxamide + NADP(+) + H2O + H(+). The enzyme catalyses rifampicin + NADH + O2 = rifampicin para-naphthoquinone carboxamide + NAD(+) + H2O + H(+). Functionally, monooxygenase that can modify rifampicin, thereby inactivating its antibiotic activity. It constitutes a secondary rifampicin resistance factor. This Nocardia farcinica (strain IFM 10152) protein is Rifampicin monooxygenase.